The following is a 655-amino-acid chain: Protein-glucosylgalactosylhydroxylysine glucosidase (655 aa).

258 to 259 is a substrate binding site; it reads WD. Catalysis depends on glutamate 388, which acts as the Proton donor. 456-457 provides a ligand contact to substrate; that stretch reads KQ.

Belongs to the glycosyl hydrolase 65 family.

It carries out the reaction (5R)-5-O-[alpha-D-glucosyl-(1-&gt;2)-beta-D-galactosyl]-5-hydroxy-L-lysyl-[collagen] + H2O = (5R)-5-O-(beta-D-galactosyl)-5-hydroxy-L-lysyl-[collagen] + D-glucose. In terms of biological role, catalyzes the hydrolysis of glucose from the disaccharide unit linked to hydroxylysine residues of collagen and collagen-like proteins. The chain is Protein-glucosylgalactosylhydroxylysine glucosidase from Danio rerio (Zebrafish).